A 233-amino-acid polypeptide reads, in one-letter code: 7-cyano-7-deazaguanine synthase (233 aa).

7–17 contributes to the ATP binding site; that stretch reads LSGGLDSLVTS. Residues Cys-195, Cys-206, Cys-209, and Cys-212 each coordinate Zn(2+).

Belongs to the QueC family. Requires Zn(2+) as cofactor.

It carries out the reaction 7-carboxy-7-deazaguanine + NH4(+) + ATP = 7-cyano-7-deazaguanine + ADP + phosphate + H2O + H(+). It functions in the pathway purine metabolism; 7-cyano-7-deazaguanine biosynthesis. Functionally, catalyzes the ATP-dependent conversion of 7-carboxy-7-deazaguanine (CDG) to 7-cyano-7-deazaguanine (preQ(0)). In Methanococcus vannielii (strain ATCC 35089 / DSM 1224 / JCM 13029 / OCM 148 / SB), this protein is 7-cyano-7-deazaguanine synthase.